The primary structure comprises 481 residues: ATP synthase subunit beta, chloroplastic (481 aa).

162–169 (GGAGVGKT) serves as a coordination point for ATP.

It belongs to the ATPase alpha/beta chains family. As to quaternary structure, F-type ATPases have 2 components, CF(1) - the catalytic core - and CF(0) - the membrane proton channel. CF(1) has five subunits: alpha(3), beta(3), gamma(1), delta(1), epsilon(1). CF(0) has four main subunits: a(1), b(1), b'(1) and c(9-12).

It is found in the plastid. The protein localises to the chloroplast thylakoid membrane. The catalysed reaction is ATP + H2O + 4 H(+)(in) = ADP + phosphate + 5 H(+)(out). Produces ATP from ADP in the presence of a proton gradient across the membrane. The catalytic sites are hosted primarily by the beta subunits. The protein is ATP synthase subunit beta, chloroplastic of Chlorella vulgaris (Green alga).